Consider the following 549-residue polypeptide: Alanine aminotransferase 2-like (549 aa).

N6-(pyridoxal phosphate)lysine is present on Lys367.

It belongs to the class-I pyridoxal-phosphate-dependent aminotransferase family. Alanine aminotransferase subfamily. As to quaternary structure, homodimer. Pyridoxal 5'-phosphate is required as a cofactor.

It carries out the reaction L-alanine + 2-oxoglutarate = pyruvate + L-glutamate. It functions in the pathway amino-acid degradation; L-alanine degradation via transaminase pathway; pyruvate from L-alanine: step 1/1. Its function is as follows. Catalyzes the reversible transamination between alanine and 2-oxoglutarate to form pyruvate and glutamate. In Danio rerio (Zebrafish), this protein is Alanine aminotransferase 2-like (gpt2l).